A 206-amino-acid polypeptide reads, in one-letter code: MKAKREALISLFHAIKEEKVDSDIIDLLLLINSIKGIYTTSSCSGRIGILEEPSLGAKPLSRWLIKVHRPMSFEEARDALKRAREGLIFLKSQPPIFHVVAETIENAKLVHEIGLASGFKYTTFKAISSRFLVEINGTEYLTVPLGKDGRIIASDEYLKFAISIGNKMLERGKSKLPRLRDNFEKIKKKLGEDPLFIQLKREILEI.

The protein belongs to the TYW3 family.

The catalysed reaction is 4-demethyl-7-[(3S)-3-amino-3-carboxypropyl]wyosine(37) in tRNA(Phe) + S-adenosyl-L-methionine = 7-[(3S)-3-amino-3-carboxypropyl]wyosine(37) in tRNA(Phe) + S-adenosyl-L-homocysteine + H(+). Its function is as follows. S-adenosyl-L-methionine-dependent methyltransferase that acts as a component of the wyosine derivatives biosynthesis pathway. Probably methylates N-4 position of wybutosine-86 to produce wybutosine-72. This is tRNA(Phe) 7-((3-amino-3-carboxypropyl)-4-demethylwyosine(37)-N(4))-methyltransferase 2 from Pyrococcus horikoshii (strain ATCC 700860 / DSM 12428 / JCM 9974 / NBRC 100139 / OT-3).